A 257-amino-acid polypeptide reads, in one-letter code: Small ribosomal subunit protein uS2 (257 aa).

It belongs to the universal ribosomal protein uS2 family.

The sequence is that of Small ribosomal subunit protein uS2 from Trichlorobacter lovleyi (strain ATCC BAA-1151 / DSM 17278 / SZ) (Geobacter lovleyi).